We begin with the raw amino-acid sequence, 496 residues long: Fibronectin type III and SPRY domain-containing protein 1 (496 aa).

Residues 4 to 99 are a coiled coil; it reads QREALRKIIK…ALESSEELLE (96 aa). The COS domain maps to 105-162; it reads LQAMDSEDFPQAAKQIKDGVTMAPAFRLSLKAKVSDNMSHLMVDFAQERQMLQALKFL. Positions 164 to 268 constitute a Fibronectin type-III domain; sequence VPSAPVIDLA…EPVTLETPAF (105 aa). The B30.2/SPRY domain occupies 268 to 477; it reads FMFRLDASTS…VTTGLQVPSA (210 aa). Residues 301–336 form a disordered region; sequence KAREKDGKGRTASPINSPARGTPSPKRMPSGRGGRD. Residues R310 and R320 each carry the omega-N-methylarginine modification.

As to quaternary structure, oligomerization is required for binding to microtubules. In terms of tissue distribution, highly expressed in brain tissues, including cerebellum, cerebral cortex, medulla, occipital pole, frontal lobe, temporal lobe and putamen. Lower expression in spinal cord.

Its subcellular location is the cytoplasm. The protein resides in the cytoskeleton. It localises to the microtubule organizing center. The protein localises to the centrosome. It is found in the nucleus. Its subcellular location is the cleavage furrow. May be involved in microtubule organization and stabilization. This is Fibronectin type III and SPRY domain-containing protein 1 (FSD1) from Homo sapiens (Human).